The sequence spans 615 residues: Isocitrate dehydrogenase kinase/phosphatase (615 aa).

ATP-binding positions include 325–331 (APGIKGM) and Lys-346. Asp-381 is an active-site residue.

The protein belongs to the AceK family.

It localises to the cytoplasm. The catalysed reaction is L-seryl-[isocitrate dehydrogenase] + ATP = O-phospho-L-seryl-[isocitrate dehydrogenase] + ADP + H(+). Bifunctional enzyme which can phosphorylate or dephosphorylate isocitrate dehydrogenase (IDH) on a specific serine residue. This is a regulatory mechanism which enables bacteria to bypass the Krebs cycle via the glyoxylate shunt in response to the source of carbon. When bacteria are grown on glucose, IDH is fully active and unphosphorylated, but when grown on acetate or ethanol, the activity of IDH declines drastically concomitant with its phosphorylation. In Albidiferax ferrireducens (strain ATCC BAA-621 / DSM 15236 / T118) (Rhodoferax ferrireducens), this protein is Isocitrate dehydrogenase kinase/phosphatase.